The following is a 147-amino-acid chain: Globin, major monomeric component (147 aa).

Residues 1–146 (GLSAAQRQVI…ISGALISGLQ (146 aa)) form the Globin domain. His90 contacts heme b.

The protein belongs to the globin family. As to quaternary structure, monomer.

This chain is Globin, major monomeric component, found in Glycera dibranchiata (Bloodworm).